The primary structure comprises 953 residues: Isoleucine--tRNA ligase (953 aa).

Residues P57–H67 carry the 'HIGH' region motif. E582 is a binding site for L-isoleucyl-5'-AMP. The short motif at K623–S627 is the 'KMSKS' region element. K626 contacts ATP. Zn(2+) contacts are provided by C916, C919, C936, and C939.

This sequence belongs to the class-I aminoacyl-tRNA synthetase family. IleS type 1 subfamily. As to quaternary structure, monomer. It depends on Zn(2+) as a cofactor.

The protein localises to the cytoplasm. It catalyses the reaction tRNA(Ile) + L-isoleucine + ATP = L-isoleucyl-tRNA(Ile) + AMP + diphosphate. Functionally, catalyzes the attachment of isoleucine to tRNA(Ile). As IleRS can inadvertently accommodate and process structurally similar amino acids such as valine, to avoid such errors it has two additional distinct tRNA(Ile)-dependent editing activities. One activity is designated as 'pretransfer' editing and involves the hydrolysis of activated Val-AMP. The other activity is designated 'posttransfer' editing and involves deacylation of mischarged Val-tRNA(Ile). In Bordetella pertussis (strain Tohama I / ATCC BAA-589 / NCTC 13251), this protein is Isoleucine--tRNA ligase.